Reading from the N-terminus, the 215-residue chain is Cytochrome c biogenesis ATP-binding export protein CcmA (215 aa).

In terms of domain architecture, ABC transporter spans 7–209; that stretch reads LKIDRLACQR…ALTVLNLAQY (203 aa). Residue 39-46 coordinates ATP; that stretch reads GHNGIGKT.

Belongs to the ABC transporter superfamily. CcmA exporter (TC 3.A.1.107) family. In terms of assembly, the complex is composed of two ATP-binding proteins (CcmA) and two transmembrane proteins (CcmB).

The protein resides in the cell inner membrane. The enzyme catalyses heme b(in) + ATP + H2O = heme b(out) + ADP + phosphate + H(+). In terms of biological role, part of the ABC transporter complex CcmAB involved in the biogenesis of c-type cytochromes; once thought to export heme, this seems not to be the case, but its exact role is uncertain. Responsible for energy coupling to the transport system. This Mannheimia succiniciproducens (strain KCTC 0769BP / MBEL55E) protein is Cytochrome c biogenesis ATP-binding export protein CcmA.